A 267-amino-acid polypeptide reads, in one-letter code: Ribosyldihydronicotinamide dehydrogenase-like protein traD (267 aa).

FAD is bound by residues histidine 9, 15 to 16 (LN), and 100 to 103 (LWWF). 122–124 (GHG) serves as a coordination point for substrate. FAD is bound by residues 152–155 (TLGG) and tyrosine 160.

Belongs to the NAD(P)H dehydrogenase (quinone) family. In terms of assembly, homodimer. The cofactor is FAD.

It functions in the pathway secondary metabolite biosynthesis. Ribosyldihydronicotinamide dehydrogenase-like protein; part of the tra gene cluster that produces terrestric acid. The clavatol biosynthesis cluster cla and the terrestric acid cluster tra are both involved in the production of peniphenones and penilactones. The non-reducing PKS claF is responsible for the formation of clavatol from successive condensations of 3 malonyl-CoA units, presumably with a simple acetyl-CoA starter unit, and 2 methylation steps. The esterase claE probably collaborates with claF by catalyzing the hydrolysis of ACP-bound acyl intermediates to free the ACP from stalled intermediates. The clavatol oxidase claD then converts clavatol to hydroxyclavatol. Spontaneous dehydration of hydroxyclavatol leads to the accumulation of the highly active ortho-quinone methide. On the other hand, the PKS-NRPS hybrid traA is involved in the formation of crustosic acid, with the help of traB and traD. The polyketide synthase module (PKS) of traA is responsible for the synthesis of the polyketide backbone via the condensation of an acetyl-CoA starter unit with 3 malonyl-CoA units. The downstream nonribosomal peptide synthetase (NRPS) module then amidates the carboxyl end of the polyketide with L-malic acid. Because traA lacks a designated enoylreductase (ER) domain, the required activity is provided the enoyl reductase traG. Crustosic acid undergoes decarboxylation and isomerization to the terrestric acid, catalyzed by the 2-oxoglutarate-dependent dioxygenase traH. Both acids are further converted to the 2 gamma-butyrolactones (R)-5-methyltetronic acid and (S)-5-carboxylmethyltetronic acid, with involvement of the cytochrome P450 monooxygenase claJ. Spontaneous addition of the methide to these gamma-butyrolactones leads to peniphenone D and penilactone D, which undergo again stereospecific attacking by methide to give penilactones A and B. The chain is Ribosyldihydronicotinamide dehydrogenase-like protein traD from Penicillium crustosum (Blue mold fungus).